The sequence spans 794 residues: Putative neurotrophin receptor LTRK 1 (794 aa).

A signal peptide spans 1–33; that stretch reads MRGPRRFRLWTRANVLTVISILTSILSGAGCSP. The Extracellular segment spans residues 34 to 419; that stretch reads LSQLPSDNPA…PTEDFGPQTQ (386 aa). Residues 36 to 102 are disordered; sequence QLPSDNPAHV…DQVPGDASRN (67 aa). Residues Asn-64, Asn-102, and Asn-128 are each glycosylated (N-linked (GlcNAc...) asparagine). LRR repeat units lie at residues 181–202 and 205–226; these read CLKH…AFKT and SLET…LLRT. The LRRCT domain maps to 237–280; sequence NALTCSCTNLWLRSVDVAADRSEMTCSTRDGVSKMKMTQFKCEP. N-linked (GlcNAc...) asparagine glycans are attached at residues Asn-288 and Asn-374. The chain crosses the membrane as a helical span at residues 420 to 440; the sequence is VILPVVGVVILLISAVFIIYL. Topologically, residues 441-794 are cytoplasmic; it reads CQRAKHRSHA…GDPVYIDIIA (354 aa). In terms of domain architecture, Protein kinase spans 504–775; the sequence is ILLMRVIGEG…PQDRLTMKDI (272 aa). Residues 510–518 and Lys-538 each bind ATP; that span reads IGEGAFGRV. Catalysis depends on Asp-647, which acts as the Proton acceptor. A phosphotyrosine; by autocatalysis mark is found at Tyr-673, Tyr-677, Tyr-678, and Tyr-789.

It belongs to the protein kinase superfamily. Tyr protein kinase family. Insulin receptor subfamily. Expression is confined to the central nervous system and its associated endocrine tissues.

It localises to the membrane. The catalysed reaction is L-tyrosyl-[protein] + ATP = O-phospho-L-tyrosyl-[protein] + ADP + H(+). Its function is as follows. May bind an endogenous invertebrate neurotrophin. Binds human NT-3, but not NGF or BDNF. This chain is Putative neurotrophin receptor LTRK 1, found in Lymnaea stagnalis (Great pond snail).